The sequence spans 591 residues: Protein misato homolog 1 (591 aa).

This sequence belongs to the misato family.

It localises to the mitochondrion outer membrane. The protein localises to the cytoplasm. Functionally, involved in the regulation of mitochondrial distribution and morphology. Required for mitochondrial fusion and mitochondrial network formation. The protein is Protein misato homolog 1 (msto1) of Danio rerio (Zebrafish).